The sequence spans 321 residues: MTKYALVGDVGGTNARLALCDIASGEISQAKTYSGLDYPSLEAVIRVYLEEHKVEVKDGCIAIACPITGDWVAMTNHTWAFSIAEMKKNLGFSHLEIINDFTAVSMAIPMLKKEHLIQFGGAEPVEGKPIAVYGAGTGLGVAHLVHVDKRWVSLPGEGGHVDFAPNSEEEAIILEILRAEIGHVSAERVLSGPGLVNLYRAIVKADNRLPENLKPKDITERALADSCTDCRRALSLFCVIMGRFGGNLALTLGTFGGVYIAGGIVPRFLEFFKASGFRAAFEDKGRFKEYVHDIPVYLIVHDNPGLLGSGAHLRQTLGHIL.

8-13 (GDVGGT) serves as a coordination point for ATP.

The protein belongs to the bacterial glucokinase family.

It is found in the cytoplasm. It catalyses the reaction D-glucose + ATP = D-glucose 6-phosphate + ADP + H(+). The sequence is that of Glucokinase from Shigella sonnei (strain Ss046).